Reading from the N-terminus, the 257-residue chain is 5-oxoprolinase subunit A (257 aa).

It belongs to the LamB/PxpA family. As to quaternary structure, forms a complex composed of PxpA, PxpB and PxpC.

The enzyme catalyses 5-oxo-L-proline + ATP + 2 H2O = L-glutamate + ADP + phosphate + H(+). In terms of biological role, catalyzes the cleavage of 5-oxoproline to form L-glutamate coupled to the hydrolysis of ATP to ADP and inorganic phosphate. In Pectobacterium atrosepticum (strain SCRI 1043 / ATCC BAA-672) (Erwinia carotovora subsp. atroseptica), this protein is 5-oxoprolinase subunit A.